The following is a 486-amino-acid chain: BTB/POZ domain and ankyrin repeat-containing protein NBCL (486 aa).

The BTB domain maps to 25-115 (SDVTFSVEGR…LYSGQVSIVP (91 aa)). The C2HC NPR-type zinc finger occupies 121-135 (RPNCGERGCWHTHCS). Positions 124, 129, 131, and 134 each coordinate Zn(2+). 4 ANK repeats span residues 257–286 (QKIR…LNLD), 287–316 (EALA…DVNY), 321–350 (AGKT…DPNV), and 354–388 (DNVT…KLRL). Disordered regions lie at residues 403–441 (EEGN…NNHN) and 464–486 (QMSD…HHDY). Low complexity-rich tracts occupy residues 406-418 (NANN…TTTT) and 432-441 (SSSSSGNNHN). Basic and acidic residues predominate over residues 466-475 (SDDHGGRHGD).

The protein belongs to the plant 'ANKYRIN-BTB/POZ' family. 'NOOT-BOP-COCH-like' (NBCL) subfamily. As to quaternary structure, homodimer.

Its subcellular location is the nucleus. It localises to the cytoplasm. The protein resides in the cell membrane. It functions in the pathway protein modification; protein ubiquitination. In terms of biological role, may act as a substrate-specific adapter of an E3 ubiquitin-protein ligase complex (CUL3-RBX1-BTB) which mediates the ubiquitination and subsequent proteasomal degradation of target proteins. Transcriptional co-regulator involved in the promotion of leaf and floral meristem fate and determinacy. Necessary for the development of stipules at the base of petioles. Required for the abscission of senescent organs, probably by regulating the cell wall disorganization in abscission zones (AZs, e.g. pulvini at the base of leaves). Promotes slightly root-cap border cells separation from the root tip. Involved in the coordination of the symbiotic nodule developmental program; promotes the formation of root nodules by interacting directly with APP1 to modulate the expression of the nuclear transcription factor Y subunit (NF-YA1), a key nodulin. Necessary for the robust maintenance of nodule identity throughout the nodule developmental program. The protein is BTB/POZ domain and ankyrin repeat-containing protein NBCL of Lupinus angustifolius (Narrow-leaved blue lupine).